Consider the following 161-residue polypeptide: Nucleotide-binding protein HCH_04620 (161 aa).

It belongs to the YajQ family.

Nucleotide-binding protein. This chain is Nucleotide-binding protein HCH_04620, found in Hahella chejuensis (strain KCTC 2396).